The following is a 422-amino-acid chain: Probable D-serine dehydratase (422 aa).

Residue lysine 105 is modified to N6-(pyridoxal phosphate)lysine.

This sequence belongs to the serine/threonine dehydratase family. DsdA subfamily. Pyridoxal 5'-phosphate is required as a cofactor.

The catalysed reaction is D-serine = pyruvate + NH4(+). The polypeptide is Probable D-serine dehydratase (Carboxydothermus hydrogenoformans (strain ATCC BAA-161 / DSM 6008 / Z-2901)).